We begin with the raw amino-acid sequence, 373 residues long: D-alanine--D-alanine ligase (373 aa).

Residues 156–363 (KKLWSAAGLP…YPTLLATMVE (208 aa)) form the ATP-grasp domain. 184–239 (LQRLGLPAYVKPARGGSSIGVSRVSSFDELPAAIAAARRHDPKVIVEAAINGRELE) is a binding site for ATP. Mg(2+) is bound by residues D318, E330, and N332.

This sequence belongs to the D-alanine--D-alanine ligase family. The cofactor is Mg(2+). Mn(2+) is required as a cofactor.

It is found in the cytoplasm. It catalyses the reaction 2 D-alanine + ATP = D-alanyl-D-alanine + ADP + phosphate + H(+). It functions in the pathway cell wall biogenesis; peptidoglycan biosynthesis. In terms of biological role, cell wall formation. In Mycobacterium ulcerans (strain Agy99), this protein is D-alanine--D-alanine ligase.